Consider the following 500-residue polypeptide: MKFKVINEKISNLMVDILIIGIYEEVKSLGDVHHTMDQQLGGLIQEMINAEEFKGEEGETLLVHTLGRVPAKKCILLGLGKAEAFKENNLRNVVAKVMREARKSRAETIAITPFGICNHISAEKVGQAIAEGTKLGLYQFNHYKTTAKEQEERVLQEVYILNEETGITAQLQTGIDTGEKLAHATMIARDLVNEPGNVLTPTEMAKRAQSISQKHGLELEILEKEDMERLGMGCFLGVTAGSEEPPKLMVLKYNGGEEGGEILGLVGKGLTFDSGGISIKPGEGMDAMKGDMGGAAAVLGAMEAIGALKPKTNVIAVVGACENMPSGKAYKPGDILTSKGGKTVEILNTDAEGRLVLVDCVSYALQLGATRLVDLATLTGACLIALGTTTTALISNDELWVKQIEDASKNAGEQVWQLPSFPEYKEMIKSEIADLKNIGGKYAGAITAGLFVGEFAEGKPWVHMDIAGTSMSDKEKGYITKGGTGVAVRTLYELAKSMEK.

Mn(2+)-binding residues include K268 and D273. Residue K280 is part of the active site. Residues D291, D350, and E352 each coordinate Mn(2+). Residue R354 is part of the active site.

This sequence belongs to the peptidase M17 family. Mn(2+) serves as cofactor.

It localises to the cytoplasm. The catalysed reaction is Release of an N-terminal amino acid, Xaa-|-Yaa-, in which Xaa is preferably Leu, but may be other amino acids including Pro although not Arg or Lys, and Yaa may be Pro. Amino acid amides and methyl esters are also readily hydrolyzed, but rates on arylamides are exceedingly low.. It catalyses the reaction Release of an N-terminal amino acid, preferentially leucine, but not glutamic or aspartic acids.. Functionally, presumably involved in the processing and regular turnover of intracellular proteins. Catalyzes the removal of unsubstituted N-terminal amino acids from various peptides. This is Probable cytosol aminopeptidase from Alkaliphilus metalliredigens (strain QYMF).